A 120-amino-acid chain; its full sequence is MLKFTEEHEWLKVEGGVATVGITEHAAGQLGDLVFVELPEAGATFSKGDSAATVESVKAASDVYCPLDGEIVEINQAIVDDPSLVNSDPQGAAWFFKLKLADPRSADNLLDEAAYKELVG.

In terms of domain architecture, Lipoyl-binding spans 17–99 (VATVGITEHA…QGAAWFFKLK (83 aa)). Residue Lys58 is modified to N6-lipoyllysine.

This sequence belongs to the GcvH family. As to quaternary structure, the glycine cleavage system is composed of four proteins: P, T, L and H. (R)-lipoate serves as cofactor.

In terms of biological role, the glycine cleavage system catalyzes the degradation of glycine. The H protein shuttles the methylamine group of glycine from the P protein to the T protein. This chain is Glycine cleavage system H protein, found in Sinorhizobium fredii (strain NBRC 101917 / NGR234).